The following is a 671-amino-acid chain: DNA ligase (671 aa).

Residues 32-36, 81-82, and glutamate 113 contribute to the NAD(+) site; these read DAEYD and SL. Lysine 115 serves as the catalytic N6-AMP-lysine intermediate. 4 residues coordinate NAD(+): arginine 136, glutamate 173, lysine 290, and lysine 314. Cysteine 408, cysteine 411, cysteine 426, and cysteine 432 together coordinate Zn(2+). In terms of domain architecture, BRCT spans 593 to 671; the sequence is EIDSPFAGKT…EAEMMRLLGE (79 aa).

Belongs to the NAD-dependent DNA ligase family. LigA subfamily. The cofactor is Mg(2+). Mn(2+) is required as a cofactor.

The enzyme catalyses NAD(+) + (deoxyribonucleotide)n-3'-hydroxyl + 5'-phospho-(deoxyribonucleotide)m = (deoxyribonucleotide)n+m + AMP + beta-nicotinamide D-nucleotide.. DNA ligase that catalyzes the formation of phosphodiester linkages between 5'-phosphoryl and 3'-hydroxyl groups in double-stranded DNA using NAD as a coenzyme and as the energy source for the reaction. It is essential for DNA replication and repair of damaged DNA. This Klebsiella pneumoniae (strain 342) protein is DNA ligase.